We begin with the raw amino-acid sequence, 556 residues long: Hydroxylamine reductase (556 aa).

4 residues coordinate [4Fe-4S] cluster: C5, C8, C17, and C23. H249, E273, C317, C409, C437, C462, E497, and K499 together coordinate hybrid [4Fe-2O-2S] cluster. C409 is subject to Cysteine persulfide.

The protein belongs to the HCP family. It depends on [4Fe-4S] cluster as a cofactor. The cofactor is hybrid [4Fe-2O-2S] cluster.

It is found in the cytoplasm. The enzyme catalyses A + NH4(+) + H2O = hydroxylamine + AH2 + H(+). Its function is as follows. Catalyzes the reduction of hydroxylamine to form NH(3) and H(2)O. This Kosmotoga olearia (strain ATCC BAA-1733 / DSM 21960 / TBF 19.5.1) protein is Hydroxylamine reductase.